The following is a 574-amino-acid chain: Sulfate adenylyltransferase (574 aa).

The segment at 1–169 (MANTPHGGVL…LEAVNKLNHY (169 aa)) is N-terminal. The catalytic stretch occupies residues 170–394 (DYVGLRYTPA…LRESSPPRAL (225 aa)). Glutamine 197 is a binding site for sulfate. Residues 197–200 (QTRN) and 291–294 (GRDH) each bind ATP. Active-site residues include threonine 198, arginine 199, and asparagine 200. Arginine 199 provides a ligand contact to sulfate. Alanine 295 serves as a coordination point for sulfate. Residue valine 333 coordinates ATP. The segment at 395–574 (QGFTIFLTGY…LESEGYFERL (180 aa)) is allosteric regulation domain; adenylyl-sulfate kinase-like. 3'-phosphoadenylyl sulfate-binding positions include 434–437 (DTVR), arginine 451, 477–478 (IA), and arginine 516.

It in the N-terminal section; belongs to the sulfate adenylyltransferase family. In the C-terminal section; belongs to the APS kinase family. Homohexamer. Dimer of trimers.

Its subcellular location is the cytoplasm. The enzyme catalyses sulfate + ATP + H(+) = adenosine 5'-phosphosulfate + diphosphate. It functions in the pathway sulfur metabolism; hydrogen sulfide biosynthesis; sulfite from sulfate: step 1/3. Allosterically inhibited by 3'-phosphoadenosine 5'-phosphosulfate (PAPS). Functionally, catalyzes the first intracellular reaction of sulfate assimilation, forming adenosine-5'-phosphosulfate (APS) from inorganic sulfate and ATP. Plays an important role in sulfate activation as a component of the biosynthesis pathway of sulfur-containing amino acids. This is Sulfate adenylyltransferase from Emericella nidulans (strain FGSC A4 / ATCC 38163 / CBS 112.46 / NRRL 194 / M139) (Aspergillus nidulans).